The chain runs to 268 residues: Tryptophan synthase alpha chain (268 aa).

Active-site proton acceptor residues include E49 and D60.

It belongs to the TrpA family. In terms of assembly, tetramer of two alpha and two beta chains.

It catalyses the reaction (1S,2R)-1-C-(indol-3-yl)glycerol 3-phosphate + L-serine = D-glyceraldehyde 3-phosphate + L-tryptophan + H2O. Its pathway is amino-acid biosynthesis; L-tryptophan biosynthesis; L-tryptophan from chorismate: step 5/5. Its function is as follows. The alpha subunit is responsible for the aldol cleavage of indoleglycerol phosphate to indole and glyceraldehyde 3-phosphate. In Shigella boydii serotype 4 (strain Sb227), this protein is Tryptophan synthase alpha chain.